Reading from the N-terminus, the 93-residue chain is Small ribosomal subunit protein uS17 (93 aa).

Belongs to the universal ribosomal protein uS17 family. In terms of assembly, part of the 30S ribosomal subunit.

One of the primary rRNA binding proteins, it binds specifically to the 5'-end of 16S ribosomal RNA. This Bordetella avium (strain 197N) protein is Small ribosomal subunit protein uS17.